We begin with the raw amino-acid sequence, 255 residues long: MSMEDPFFVVKGEVQKAVNTAQGLFQRWTELLQDPSTATREEIDWTTNELRNNLRSIEWDLEDLDETISIVEANPRKFNLDATELSIRKAFITSTRQVVRDMKDQMSTSSVQALAERKNRQALLGDSGSQNWSTGTTDKYGRLDRELQRANSHFIEEQQAQQQLIVEQQDEQLELVSGSIGVLKNMSQRIGGELEEQAVMLEDFSHELESTQSRLDNVMKKLAKVSHMTSDRRQWCAIAILFAVLLVVLILFLVL.

The residue at position 2 (serine 2) is an N-acetylserine. The residue at position 2 (serine 2) is a Phosphoserine. Residues 2–168 (SMEDPFFVVK…QAQQQLIVEQ (167 aa)) are required for interaction with VPS51. Over 2–234 (SMEDPFFVVK…VSHMTSDRRQ (233 aa)) the chain is Cytoplasmic. A coiled-coil region spans residues 41–74 (EEIDWTTNELRNNLRSIEWDLEDLDETISIVEAN). A phosphoserine mark is found at serine 129 and serine 152. The region spanning 163–225 (QLIVEQQDEQ…DNVMKKLAKV (63 aa)) is the t-SNARE coiled-coil homology domain. The chain crosses the membrane as a helical; Anchor for type IV membrane protein span at residues 235–255 (WCAIAILFAVLLVVLILFLVL).

The protein belongs to the syntaxin family. In terms of assembly, identified in a complex containing STX6, STX12, VAMP4 and VTI1A. Binds EEA1. Interacts with VPS45A. Interacts with MARCHF2; the interaction promotes MARCHF2-mediated ubiquitination and degradation of CFTR. Interacts with MARCHF3. Interacts with GOPC. Interacts with BLTP3B (via C-terminal coiled-coil domain). Interacts with BAIAP3; this interaction is increased in the presence of calcium. Interacts with VPS13B.

The protein resides in the golgi apparatus membrane. The protein localises to the golgi apparatus. Its subcellular location is the trans-Golgi network membrane. It is found in the recycling endosome membrane. Functionally, SNARE promoting movement of transport vesicles to target membranes. Targets endosomes to the trans-Golgi network, and may therefore function in retrograde trafficking. Together with SNARE STX12, promotes movement of vesicles from endosomes to the cell membrane, and may therefore function in the endocytic recycling pathway. The sequence is that of Syntaxin-6 (STX6) from Homo sapiens (Human).